A 181-amino-acid polypeptide reads, in one-letter code: Mitochondrial pyruvate carrier-like protein (181 aa).

2 helical membrane-spanning segments follow: residues 23-42 and 52-74; these read YLAS…PLAA and IISG…FAYR. The disordered stretch occupies residues 125 to 154; it reads TGSVDSSATSTGSVDSSATSTGSVDSSAAT.

Belongs to the mitochondrial pyruvate carrier (MPC) (TC 2.A.105) family.

Its subcellular location is the mitochondrion inner membrane. May mediate the uptake of pyruvate into mitochondria. The polypeptide is Mitochondrial pyruvate carrier-like protein (Bos taurus (Bovine)).